A 743-amino-acid chain; its full sequence is Tudor domain-containing protein 3 (743 aa).

Positions 241–262 (KTFGGGGGGARSNLNIGAAGHR) are disordered. The UBA domain maps to 286–326 (LVDEKALKHITEMGFSKEASRQALMDNANNLEAALNVLLNS). 2 disordered regions span residues 327–365 (SKQKPAVGPPARGRGKGRGRGRSEDEEDLGTARPSAPST) and 380–549 (EEPK…CYER). Serine 349 carries the post-translational modification Phosphoserine. Over residues 414–431 (PRNDTRQPRNERPPRFQK) the composition is skewed to basic and acidic residues. Residues 432–445 (DTPTSKSTVENSVL) show a composition bias toward polar residues. Serine 438 carries the post-translational modification Phosphoserine. Basic and acidic residues-rich tracts occupy residues 464–484 (AEERIKCDRPYSRYDRTKDAS) and 536–549 (RENQTGHPDHCYER). A Glycyl lysine isopeptide (Lys-Gly) (interchain with G-Cter in SUMO2) cross-link involves residue lysine 563. Residues 572-603 (TDYPRPVQSNSLGVPNGETAPPLKGRRVGPIK) are disordered. Residues 647–707 (VWKPGDECFA…KPVQTEAWEE (61 aa)) enclose the Tudor domain. Basic and acidic residues predominate over residues 711–725 (YDHTIEFRRGGDGQP). Residues 711 to 743 (YDHTIEFRRGGDGQPRRSTRPTQQFYQPPRARN) are disordered. Residues 723-743 (GQPRRSTRPTQQFYQPPRARN) form an EBM motif; may mediate interaction with the EJC region.

Component of mRNA stress granules. Interacts with FMR1, FXR1, FXR2, EWSR1, FUS, SERBP1, EEF1A1 and DDX3X or DDX3Y, and with the small nuclear ribonucleoprotein-associated proteins SNRPB and SNRPN. Interacts with 'Lys-48'-linked tetra-ubiquitin, but not with monoubiquitin or 'Lys-63'-linked ubiquitin chains. May interact with the exon junction complex (EJC) composed at least of CASC3, EIF4A3, MAGOH and RBM8A. Interacts with POLR2A (via the C-terminal domain (CTD)).

It localises to the cytoplasm. It is found in the nucleus. Scaffolding protein that specifically recognizes and binds dimethylarginine-containing proteins. Plays a role in the regulation of translation of target mRNAs by binding Arg/Gly-rich motifs (GAR) in dimethylarginine-containing proteins. In nucleus, acts as a coactivator: recognizes and binds asymmetric dimethylation on the core histone tails associated with transcriptional activation (H3R17me2a and H4R3me2a) and recruits proteins at these arginine-methylated loci. In cytoplasm, acts as an antiviral factor that participates in the assembly of stress granules together with G3BP1. In Mus musculus (Mouse), this protein is Tudor domain-containing protein 3 (Tdrd3).